Consider the following 179-residue polypeptide: Large ribosomal subunit protein uL5 (179 aa).

The protein belongs to the universal ribosomal protein uL5 family. In terms of assembly, part of the 50S ribosomal subunit; part of the 5S rRNA/L5/L18/L25 subcomplex. Contacts the 5S rRNA and the P site tRNA. Forms a bridge to the 30S subunit in the 70S ribosome.

Its function is as follows. This is one of the proteins that bind and probably mediate the attachment of the 5S RNA into the large ribosomal subunit, where it forms part of the central protuberance. In the 70S ribosome it contacts protein S13 of the 30S subunit (bridge B1b), connecting the 2 subunits; this bridge is implicated in subunit movement. Contacts the P site tRNA; the 5S rRNA and some of its associated proteins might help stabilize positioning of ribosome-bound tRNAs. This chain is Large ribosomal subunit protein uL5, found in Albidiferax ferrireducens (strain ATCC BAA-621 / DSM 15236 / T118) (Rhodoferax ferrireducens).